Reading from the N-terminus, the 304-residue chain is Glycine--tRNA ligase alpha subunit (304 aa).

This sequence belongs to the class-II aminoacyl-tRNA synthetase family. Tetramer of two alpha and two beta subunits.

It localises to the cytoplasm. The catalysed reaction is tRNA(Gly) + glycine + ATP = glycyl-tRNA(Gly) + AMP + diphosphate. This is Glycine--tRNA ligase alpha subunit from Photorhabdus laumondii subsp. laumondii (strain DSM 15139 / CIP 105565 / TT01) (Photorhabdus luminescens subsp. laumondii).